The chain runs to 1222 residues: ATP-dependent helicase/nuclease subunit A (1222 aa).

The UvrD-like helicase ATP-binding domain maps to 39-495 (QKRTAQQIEA…ILLKENFRSQ (457 aa)). Position 60 to 67 (60 to 67 (ASAGSGKT)) interacts with ATP. The 287-residue stretch at 524–810 (QLIAGSHAQT…NLMTIHKSKG (287 aa)) folds into the UvrD-like helicase C-terminal domain.

The protein belongs to the helicase family. AddA subfamily. Heterodimer of AddA and AddB/RexB. It depends on Mg(2+) as a cofactor.

It carries out the reaction Couples ATP hydrolysis with the unwinding of duplex DNA by translocating in the 3'-5' direction.. The enzyme catalyses ATP + H2O = ADP + phosphate + H(+). The heterodimer acts as both an ATP-dependent DNA helicase and an ATP-dependent, dual-direction single-stranded exonuclease. Recognizes the chi site generating a DNA molecule suitable for the initiation of homologous recombination. The AddA nuclease domain is required for chi fragment generation; this subunit has the helicase and 3' -&gt; 5' nuclease activities. This chain is ATP-dependent helicase/nuclease subunit A, found in Streptococcus pyogenes serotype M18 (strain MGAS8232).